Consider the following 648-residue polypeptide: DNA ligase (648 aa).

NAD(+) is bound by residues 30-34 (DEEYD), 79-80 (SM), and E108. K110 acts as the N6-AMP-lysine intermediate in catalysis. R131, E165, K280, and K304 together coordinate NAD(+). Positions 398, 401, 414, and 419 each coordinate Zn(2+). In terms of domain architecture, BRCT spans 573 to 648 (AKENPFKGKI…LTEDEMRAML (76 aa)).

Belongs to the NAD-dependent DNA ligase family. LigA subfamily. Mg(2+) is required as a cofactor. Requires Mn(2+) as cofactor.

It carries out the reaction NAD(+) + (deoxyribonucleotide)n-3'-hydroxyl + 5'-phospho-(deoxyribonucleotide)m = (deoxyribonucleotide)n+m + AMP + beta-nicotinamide D-nucleotide.. In terms of biological role, DNA ligase that catalyzes the formation of phosphodiester linkages between 5'-phosphoryl and 3'-hydroxyl groups in double-stranded DNA using NAD as a coenzyme and as the energy source for the reaction. It is essential for DNA replication and repair of damaged DNA. The chain is DNA ligase from Sulfurovum sp. (strain NBC37-1).